Here is a 273-residue protein sequence, read N- to C-terminus: uncharacterized protein (273 aa).

Residues 1-10 (MSSKKVKYNP) are compositionally biased toward basic residues. Disordered regions lie at residues 1–32 (MSSK…FGFN) and 50–124 (EDVE…QSSP). 3 stretches are compositionally biased toward polar residues: residues 12–24 (KSAS…SASA), 55–64 (QSFNGKSSNL), and 92–124 (PQSS…QSSP). The residue at position 123 (S123) is a Phosphoserine.

The protein localises to the nucleus. It localises to the cytoplasm. The protein resides in the cytoskeleton. Its subcellular location is the spindle. This is an uncharacterized protein from Schizosaccharomyces pombe (strain 972 / ATCC 24843) (Fission yeast).